Consider the following 327-residue polypeptide: Ribosomal RNA large subunit methyltransferase F (327 aa).

Positions 1–31 (MTHPVTPKNTTRPTPANKPAASTLHPRNPHQ) are disordered.

This sequence belongs to the methyltransferase superfamily. METTL16/RlmF family.

Its subcellular location is the cytoplasm. It catalyses the reaction adenosine(1618) in 23S rRNA + S-adenosyl-L-methionine = N(6)-methyladenosine(1618) in 23S rRNA + S-adenosyl-L-homocysteine + H(+). In terms of biological role, specifically methylates the adenine in position 1618 of 23S rRNA. The sequence is that of Ribosomal RNA large subunit methyltransferase F from Psychrobacter sp. (strain PRwf-1).